We begin with the raw amino-acid sequence, 342 residues long: Transmembrane protein HWLF3 (342 aa).

Residues 21–64 (PCSTSCPPSPAAPTLLRRRSLPQQRRRPSSSPNRRVRGVTTSPC) are disordered. Residues 36–48 (LRRRSLPQQRRRP) are compositionally biased toward basic residues. Residues 119–139 (AIFIFQLAFSFGLGSVFWLGF) traverse the membrane as a helical segment. Asn-149 carries N-linked (GlcNAc...) asparagine; by host glycosylation. A helical membrane pass occupies residues 150 to 170 (YSFFLTVLVPIVCMFITYTLG). Asn-176 carries N-linked (GlcNAc...) asparagine; by host glycosylation. 5 consecutive transmembrane segments (helical) span residues 177 to 197 (ATVLFIYLLANSLTAAIFQMC), 202 to 222 (VLVGSYVMTLALFISFTGLAF), 231 to 251 (WKCISCVYVVMLLSFLTLALL), 266 to 286 (AFSISFFLGILAYDSLMVIFF), and 296 to 316 (AVCLYLDSMAIFLTLLLMLSG). A glycan (N-linked (GlcNAc...) asparagine; by host) is linked at Asn-330.

Belongs to the cytomegalovirus US12 family.

The protein resides in the membrane. The polypeptide is Transmembrane protein HWLF3 (US20) (Homo sapiens (Human)).